Here is a 328-residue protein sequence, read N- to C-terminus: Lipoyl synthase (328 aa).

Cys57, Cys62, Cys68, Cys83, Cys87, Cys90, and Ser298 together coordinate [4Fe-4S] cluster. The Radical SAM core domain occupies 69-287 (WSRGTATFML…REEGLSLGFL (219 aa)).

This sequence belongs to the radical SAM superfamily. Lipoyl synthase family. It depends on [4Fe-4S] cluster as a cofactor.

It localises to the cytoplasm. It carries out the reaction [[Fe-S] cluster scaffold protein carrying a second [4Fe-4S](2+) cluster] + N(6)-octanoyl-L-lysyl-[protein] + 2 oxidized [2Fe-2S]-[ferredoxin] + 2 S-adenosyl-L-methionine + 4 H(+) = [[Fe-S] cluster scaffold protein] + N(6)-[(R)-dihydrolipoyl]-L-lysyl-[protein] + 4 Fe(3+) + 2 hydrogen sulfide + 2 5'-deoxyadenosine + 2 L-methionine + 2 reduced [2Fe-2S]-[ferredoxin]. Its pathway is protein modification; protein lipoylation via endogenous pathway; protein N(6)-(lipoyl)lysine from octanoyl-[acyl-carrier-protein]: step 2/2. In terms of biological role, catalyzes the radical-mediated insertion of two sulfur atoms into the C-6 and C-8 positions of the octanoyl moiety bound to the lipoyl domains of lipoate-dependent enzymes, thereby converting the octanoylated domains into lipoylated derivatives. This Deinococcus geothermalis (strain DSM 11300 / CIP 105573 / AG-3a) protein is Lipoyl synthase.